Consider the following 254-residue polypeptide: Imidazole glycerol phosphate synthase subunit HisF (254 aa).

Residues Asp12 and Asp131 contribute to the active site.

It belongs to the HisA/HisF family. Heterodimer of HisH and HisF.

The protein localises to the cytoplasm. The enzyme catalyses 5-[(5-phospho-1-deoxy-D-ribulos-1-ylimino)methylamino]-1-(5-phospho-beta-D-ribosyl)imidazole-4-carboxamide + L-glutamine = D-erythro-1-(imidazol-4-yl)glycerol 3-phosphate + 5-amino-1-(5-phospho-beta-D-ribosyl)imidazole-4-carboxamide + L-glutamate + H(+). Its pathway is amino-acid biosynthesis; L-histidine biosynthesis; L-histidine from 5-phospho-alpha-D-ribose 1-diphosphate: step 5/9. In terms of biological role, IGPS catalyzes the conversion of PRFAR and glutamine to IGP, AICAR and glutamate. The HisF subunit catalyzes the cyclization activity that produces IGP and AICAR from PRFAR using the ammonia provided by the HisH subunit. This Corynebacterium aurimucosum (strain ATCC 700975 / DSM 44827 / CIP 107346 / CN-1) (Corynebacterium nigricans) protein is Imidazole glycerol phosphate synthase subunit HisF.